Here is a 406-residue protein sequence, read N- to C-terminus: uncharacterized protein (406 aa).

This is an uncharacterized protein from Aquifex aeolicus (strain VF5).